The sequence spans 88 residues: Kunitz-type serine protease inhibitor Hg1 (88 aa).

The N-terminal stretch at 1-21 (MIIFYGLFSILVLTSINIAEA) is a signal peptide. Residues 29–79 (CLLPPKTGPCKGSFARYYFDIETGSCKAFIYGGCEGNSNNFSEKHHCEKRC) form the BPTI/Kunitz inhibitor domain. Cystine bridges form between C29–C79, C38–C62, and C54–C75. N68 carries N-linked (GlcNAc...) asparagine glycosylation.

This sequence belongs to the venom Kunitz-type family. Scorpion delta-Ktx subfamily. Delta-Ktx 1 sub-subfamily. In terms of tissue distribution, expressed by the venom gland.

Its subcellular location is the secreted. Dual-function toxin that inhibits trypsin at a molar ratio of 1:1 (Ki=107 nM) and inhibits mKv1.3/KCNA3 potassium channels (IC(50)=6.2 nM, and inhibits 80% of currents at 1 uM). This chain is Kunitz-type serine protease inhibitor Hg1, found in Hoffmannihadrurus gertschi (Scorpion).